The primary structure comprises 354 residues: Holliday junction branch migration complex subunit RuvB (354 aa).

A disordered region spans residues 1–22 (MTIQTDDFAPAPPRVVSAAPAS). A large ATPase domain (RuvB-L) region spans residues 5–193 (TDDFAPAPPR…FGIVARLEFY (189 aa)). Residues L32, R33, G74, K77, T78, T79, 140–142 (EDY), R183, Y193, and R230 each bind ATP. T78 serves as a coordination point for Mg(2+). The interval 194–264 (TPEELALIVR…IAHKALVMLD (71 aa)) is small ATPAse domain (RuvB-S). Residues 267–354 (PQGFDLMDRK…RSDGQDLFGI (88 aa)) form a head domain (RuvB-H) region. The DNA site is built by R303, R322, and R327.

Belongs to the RuvB family. In terms of assembly, homohexamer. Forms an RuvA(8)-RuvB(12)-Holliday junction (HJ) complex. HJ DNA is sandwiched between 2 RuvA tetramers; dsDNA enters through RuvA and exits via RuvB. An RuvB hexamer assembles on each DNA strand where it exits the tetramer. Each RuvB hexamer is contacted by two RuvA subunits (via domain III) on 2 adjacent RuvB subunits; this complex drives branch migration. In the full resolvosome a probable DNA-RuvA(4)-RuvB(12)-RuvC(2) complex forms which resolves the HJ.

It localises to the cytoplasm. The catalysed reaction is ATP + H2O = ADP + phosphate + H(+). The RuvA-RuvB-RuvC complex processes Holliday junction (HJ) DNA during genetic recombination and DNA repair, while the RuvA-RuvB complex plays an important role in the rescue of blocked DNA replication forks via replication fork reversal (RFR). RuvA specifically binds to HJ cruciform DNA, conferring on it an open structure. The RuvB hexamer acts as an ATP-dependent pump, pulling dsDNA into and through the RuvAB complex. RuvB forms 2 homohexamers on either side of HJ DNA bound by 1 or 2 RuvA tetramers; 4 subunits per hexamer contact DNA at a time. Coordinated motions by a converter formed by DNA-disengaged RuvB subunits stimulates ATP hydrolysis and nucleotide exchange. Immobilization of the converter enables RuvB to convert the ATP-contained energy into a lever motion, pulling 2 nucleotides of DNA out of the RuvA tetramer per ATP hydrolyzed, thus driving DNA branch migration. The RuvB motors rotate together with the DNA substrate, which together with the progressing nucleotide cycle form the mechanistic basis for DNA recombination by continuous HJ branch migration. Branch migration allows RuvC to scan DNA until it finds its consensus sequence, where it cleaves and resolves cruciform DNA. The chain is Holliday junction branch migration complex subunit RuvB from Variovorax paradoxus (strain S110).